Consider the following 119-residue polypeptide: Ribosome-binding factor A (119 aa).

Belongs to the RbfA family. Monomer. Binds 30S ribosomal subunits, but not 50S ribosomal subunits or 70S ribosomes.

Its subcellular location is the cytoplasm. Its function is as follows. One of several proteins that assist in the late maturation steps of the functional core of the 30S ribosomal subunit. Associates with free 30S ribosomal subunits (but not with 30S subunits that are part of 70S ribosomes or polysomes). Required for efficient processing of 16S rRNA. May interact with the 5'-terminal helix region of 16S rRNA. This Chlorobium luteolum (strain DSM 273 / BCRC 81028 / 2530) (Pelodictyon luteolum) protein is Ribosome-binding factor A.